The primary structure comprises 127 residues: Major sperm protein 63 (127 aa).

Position 2 is an N-acetylalanine (Ala-2). An MSP domain is found at 9–126 (DIQTQPGTKI…RRKNLPIEYN (118 aa)).

As to expression, sperm.

The protein resides in the cell projection. Its subcellular location is the pseudopodium. It is found in the cytoplasm. The protein localises to the cytoskeleton. Functionally, central component in molecular interactions underlying sperm crawling. Forms an extensive filament system that extends from sperm villipoda, along the leading edge of the pseudopod. This is Major sperm protein 63 (msp-63) from Caenorhabditis elegans.